A 29-amino-acid polypeptide reads, in one-letter code: Galanin (29 aa).

At threonine 29 the chain carries Threonine amide.

This sequence belongs to the galanin family.

It is found in the secreted. Contracts smooth muscle of the gastrointestinal and genitourinary tract, regulates growth hormone release, modulates insulin release, and may be involved in the control of adrenal secretion. In Gallus gallus (Chicken), this protein is Galanin (GAL).